The primary structure comprises 317 residues: MEDSSNTIIPSPTDVGALANRINFQTRDAHNKINTFMGIKMAIAMRHGFIYRQGILAYYYVFDAIEQEIDRLLNDPVTEEELQTSTILKQFWLEDFRRSTQIYKDLKLLYSNTFKSTESLNEFLATFQKPPLLQQFINNIHENIHKEPCTILSYCHVLYLALFAGGKLIRSNLYRRLGLFPNFEKLSQKELVKKGTNFFTFSDLGPTEETRLKWEYKKNYELATRTELTEAQKLQIISVAEGIFDWNFNIVAEIGELNRRELMGKFSFKCITYLYEEWMFNKDSATRRALHTVMLLVLSIIAIWVLYFLVKSFLSIV.

Residues 1–289 are Cytoplasmic-facing; it reads MEDSSNTIIP…FNKDSATRRA (289 aa). Residues 290 to 310 traverse the membrane as a helical; Anchor for type IV membrane protein segment; that stretch reads LHTVMLLVLSIIAIWVLYFLV.

Heme serves as cofactor.

Its subcellular location is the endoplasmic reticulum membrane. Plays an important role in the degradation of heme under conditions of iron deprivation. This chain is Heme-binding protein HMX1 (HMX1), found in Saccharomyces cerevisiae (strain ATCC 204508 / S288c) (Baker's yeast).